The chain runs to 111 residues: MKKIYHIRKNWEFQAIINSKRQVISKNLIFYYQRNNTFKIGVSIPKKFAGAVKRNFYKRQIMAILRDIQDLTNLEYKIVMIVRKNFMALDFLEKKKEIQKMLERFKNEKRK.

It belongs to the RnpA family. In terms of assembly, consists of a catalytic RNA component (M1 or rnpB) and a protein subunit.

The catalysed reaction is Endonucleolytic cleavage of RNA, removing 5'-extranucleotides from tRNA precursor.. Its function is as follows. RNaseP catalyzes the removal of the 5'-leader sequence from pre-tRNA to produce the mature 5'-terminus. It can also cleave other RNA substrates such as 4.5S RNA. The protein component plays an auxiliary but essential role in vivo by binding to the 5'-leader sequence and broadening the substrate specificity of the ribozyme. The protein is Ribonuclease P protein component of Mycoplasmopsis pulmonis (strain UAB CTIP) (Mycoplasma pulmonis).